The chain runs to 576 residues: Arginine--tRNA ligase (576 aa).

A 'HIGH' region motif is present at residues 122–132; the sequence is PNVAKQMHVGH.

This sequence belongs to the class-I aminoacyl-tRNA synthetase family. Monomer.

The protein localises to the cytoplasm. It catalyses the reaction tRNA(Arg) + L-arginine + ATP = L-arginyl-tRNA(Arg) + AMP + diphosphate. The protein is Arginine--tRNA ligase of Yersinia pseudotuberculosis serotype I (strain IP32953).